A 370-amino-acid polypeptide reads, in one-letter code: Muconate cycloisomerase 1 (370 aa).

The active site involves Lys-166. Mn(2+) is bound by residues Asp-195, Glu-221, and Asp-246.

The protein belongs to the mandelate racemase/muconate lactonizing enzyme family. In terms of assembly, homooctamer. Mn(2+) is required as a cofactor.

It catalyses the reaction (S)-muconolactone = cis,cis-muconate + H(+). It functions in the pathway aromatic compound metabolism; beta-ketoadipate pathway; 5-oxo-4,5-dihydro-2-furylacetate from catechol: step 2/3. Catalyzes a syn cycloisomerization. The protein is Muconate cycloisomerase 1 (catB) of Acinetobacter baylyi (strain ATCC 33305 / BD413 / ADP1).